The chain runs to 203 residues: MTLVPYVVEDTGRGERAMDIYSRLLKDRIVMIGQEITEPLANTVIAQLLFLMSEDPTKDIQIFINSPGGYITAGLAIYDTIRFLGCDVNTYCIGQAASMGALLLSAGTKGKRYALPHSRMMIHQPSGGIIGTSADIQLQAAEILTLKKHLSNILAECTGQPVEKIIEDSERDFFMGAEEAIAYGLIDKVVSSAKETKDKNIVS.

The active-site Nucleophile is Ser-98. His-123 is an active-site residue.

This sequence belongs to the peptidase S14 family. Fourteen ClpP subunits assemble into 2 heptameric rings which stack back to back to give a disk-like structure with a central cavity, resembling the structure of eukaryotic proteasomes.

The protein resides in the cytoplasm. It catalyses the reaction Hydrolysis of proteins to small peptides in the presence of ATP and magnesium. alpha-casein is the usual test substrate. In the absence of ATP, only oligopeptides shorter than five residues are hydrolyzed (such as succinyl-Leu-Tyr-|-NHMec, and Leu-Tyr-Leu-|-Tyr-Trp, in which cleavage of the -Tyr-|-Leu- and -Tyr-|-Trp bonds also occurs).. Functionally, cleaves peptides in various proteins in a process that requires ATP hydrolysis. Has a chymotrypsin-like activity. Plays a major role in the degradation of misfolded proteins. The polypeptide is ATP-dependent Clp protease proteolytic subunit 2 (Chlamydia muridarum (strain MoPn / Nigg)).